The chain runs to 355 residues: UDP-N-acetylglucosamine--N-acetylmuramyl-(pentapeptide) pyrophosphoryl-undecaprenol N-acetylglucosamine transferase (355 aa).

UDP-N-acetyl-alpha-D-glucosamine contacts are provided by residues 15–17 (TGG), Asn-127, Arg-163, Ser-191, Ile-245, 264–269 (ALTVSE), and Gln-289.

It belongs to the glycosyltransferase 28 family. MurG subfamily.

Its subcellular location is the cell inner membrane. The catalysed reaction is di-trans,octa-cis-undecaprenyl diphospho-N-acetyl-alpha-D-muramoyl-L-alanyl-D-glutamyl-meso-2,6-diaminopimeloyl-D-alanyl-D-alanine + UDP-N-acetyl-alpha-D-glucosamine = di-trans,octa-cis-undecaprenyl diphospho-[N-acetyl-alpha-D-glucosaminyl-(1-&gt;4)]-N-acetyl-alpha-D-muramoyl-L-alanyl-D-glutamyl-meso-2,6-diaminopimeloyl-D-alanyl-D-alanine + UDP + H(+). It functions in the pathway cell wall biogenesis; peptidoglycan biosynthesis. Functionally, cell wall formation. Catalyzes the transfer of a GlcNAc subunit on undecaprenyl-pyrophosphoryl-MurNAc-pentapeptide (lipid intermediate I) to form undecaprenyl-pyrophosphoryl-MurNAc-(pentapeptide)GlcNAc (lipid intermediate II). The sequence is that of UDP-N-acetylglucosamine--N-acetylmuramyl-(pentapeptide) pyrophosphoryl-undecaprenol N-acetylglucosamine transferase from Yersinia enterocolitica serotype O:8 / biotype 1B (strain NCTC 13174 / 8081).